The primary structure comprises 245 residues: Aliphatic sulfonates import ATP-binding protein SsuB 2 (245 aa).

One can recognise an ABC transporter domain in the interval 15–229 (VAVRGLSRAF…DVADPEFARI (215 aa)). 47 to 54 (GASGCGKS) lines the ATP pocket.

Belongs to the ABC transporter superfamily. Aliphatic sulfonates importer (TC 3.A.1.17.2) family. In terms of assembly, the complex is composed of two ATP-binding proteins (SsuB), two transmembrane proteins (SsuC) and a solute-binding protein (SsuA).

The protein resides in the cell inner membrane. The catalysed reaction is ATP + H2O + aliphatic sulfonate-[sulfonate-binding protein]Side 1 = ADP + phosphate + aliphatic sulfonateSide 2 + [sulfonate-binding protein]Side 1.. In terms of biological role, part of the ABC transporter complex SsuABC involved in aliphatic sulfonates import. Responsible for energy coupling to the transport system. This chain is Aliphatic sulfonates import ATP-binding protein SsuB 2, found in Paracoccus denitrificans (strain Pd 1222).